A 518-amino-acid polypeptide reads, in one-letter code: Chromosomal replication initiator protein DnaA (518 aa).

The domain I, interacts with DnaA modulators stretch occupies residues 1-72 (MNEFWQHCSA…DLARDFWHSP (72 aa)). The interval 72–181 (PVDVQFVLDP…GESDSTYERS (110 aa)) is domain II. A disordered region spans residues 155-178 (AAARRTWRPGAAAQAAGGESDSTY). Residues 182 to 398 (KLNPVLTFDN…GALRKILAYS (217 aa)) are domain III, AAA+ region. ATP-binding residues include Gly226, Gly228, Lys229, and Thr230. The domain IV, binds dsDNA stretch occupies residues 399 to 518 (KFHGREITIE…LHVLEQTLKG (120 aa)).

It belongs to the DnaA family. Oligomerizes as a right-handed, spiral filament on DNA at oriC.

It is found in the cytoplasm. Plays an essential role in the initiation and regulation of chromosomal replication. ATP-DnaA binds to the origin of replication (oriC) to initiate formation of the DNA replication initiation complex once per cell cycle. Binds the DnaA box (a 9 base pair repeat at the origin) and separates the double-stranded (ds)DNA. Forms a right-handed helical filament on oriC DNA; dsDNA binds to the exterior of the filament while single-stranded (ss)DNA is stabiized in the filament's interior. The ATP-DnaA-oriC complex binds and stabilizes one strand of the AT-rich DNA unwinding element (DUE), permitting loading of DNA polymerase. After initiation quickly degrades to an ADP-DnaA complex that is not apt for DNA replication. Binds acidic phospholipids. In Paraburkholderia phymatum (strain DSM 17167 / CIP 108236 / LMG 21445 / STM815) (Burkholderia phymatum), this protein is Chromosomal replication initiator protein DnaA.